We begin with the raw amino-acid sequence, 566 residues long: Alpha-N-acetylgalactosaminide alpha-2,6-sialyltransferase 1 (566 aa).

At 1-16 (MGFLIRRLPKDSRIFR) the chain is on the cytoplasmic side. Residues 17 to 37 (WLLILTVFSFIITSFSALFGM) traverse the membrane as a helical; Signal-anchor for type II membrane protein segment. Residues 38-566 (EKSIFRQLKI…ENIMKLYQRS (529 aa)) are Lumenal-facing. N-linked (GlcNAc...) asparagine glycans are attached at residues N66 and N132. A disordered region spans residues 138–161 (ASVVERTKEKTTARPVPGVGEADG). The N-linked (GlcNAc...) asparagine glycan is linked to N192. Repeat unit 1 spans residues 247-254 (SSSPVSTC). The interval 247–337 (SSSPVSTCSE…ANSSSNVSTC (91 aa)) is 2 X 8 AA repeats of S-S-S-X-V-S-T-C. 2 disulfides stabilise this stretch: C254/C337 and C340/C508. N-linked (GlcNAc...) asparagine glycans are attached at residues N275, N286, N306, N329, and N333. The stretch at 330–337 (SSSNVSTC) is repeat 2.

It belongs to the glycosyltransferase 29 family. In terms of tissue distribution, heart, kidney, testes, brain, liver and lung.

It localises to the golgi apparatus membrane. The enzyme catalyses a beta-D-galactosyl-(1-&gt;3)-N-acetyl-alpha-D-galactosaminyl derivative + CMP-N-acetyl-beta-neuraminate = a beta-D-galactosyl-(1-&gt;3)-[N-acetyl-alpha-neuraminyl-(2-&gt;6)]-N-acetyl-alpha-D-galactosaminyl derivative + CMP + H(+). It carries out the reaction a 3-O-[N-acetyl-alpha-D-galactosaminyl]-L-seryl-[protein] + CMP-N-acetyl-beta-neuraminate = a 3-O-[N-acetyl-alpha-neuraminosyl-(2-&gt;6)-N-acetyl-alpha-D-galactosaminyl]-L-seryl-[protein] + CMP + H(+). The catalysed reaction is a 3-O-[N-acetyl-alpha-D-galactosaminyl]-L-threonyl-[protein] + CMP-N-acetyl-beta-neuraminate = a 3-O-[N-acetyl-alpha-neuraminosyl-(2-&gt;6)-N-acetyl-alpha-D-galactosaminyl]-L-threonyl-[protein] + CMP + H(+). It catalyses the reaction a 3-O-[beta-D-galactosyl-(1-&gt;3)-N-acetyl-alpha-D-galactosaminyl]-L-seryl-[protein] + CMP-N-acetyl-beta-neuraminate = a 3-O-{beta-D-galactosyl-(1-&gt;3)-[N-acetyl-alpha-neuraminosyl-(2-&gt;6)]-N-acetyl-alpha-D-galactosaminyl}-L-seryl-[protein] + CMP + H(+). The enzyme catalyses a 3-O-[beta-D-galactosyl-(1-&gt;3)-N-acetyl-alpha-D-galactosaminyl]-L-threonyl-[protein] + CMP-N-acetyl-beta-neuraminate = a 3-O-{beta-D-galactosyl-(1-&gt;3)-[N-acetyl-alpha-neuraminosyl-(2-&gt;6)]-N-acetyl-alpha-D-galactosaminyl}-L-threonyl-[protein] + CMP + H(+). It carries out the reaction a 3-O-[N-acetyl-alpha-neuraminyl-(2-&gt;3)-beta-D-galactosyl-(1-&gt;3)-N-acetyl-alpha-D-galactosaminyl]-L-threonyl-[protein] + CMP-N-acetyl-beta-neuraminate = a 3-O-{alpha-Neu5Ac-(2-&gt;3)-beta-D-Gal-(1-&gt;3)-[alpha-Neu5Ac-(2-&gt;6)]-alpha-D-GalNAc}-L-threonyl-[protein] + CMP + H(+). Its pathway is protein modification; protein glycosylation. In terms of biological role, protein sialyltransferase specifically expressed in goblet cells that plays a key role in intestinal host-commensal homeostasis. Conjugates sialic acid with an alpha-2-6 linkage to N-acetylgalactosamine (GalNAc) glycan chains linked to serine or threonine in glycoproteins. Generates sialylated T and Tn antigens.. The sequence is that of Alpha-N-acetylgalactosaminide alpha-2,6-sialyltransferase 1 (ST6GALNAC1) from Gallus gallus (Chicken).